The primary structure comprises 159 residues: Small ribosomal subunit protein bS16 (159 aa).

Low complexity predominate over residues 102–119; that stretch reads GIPEAAEEAPATESVAEA. A disordered region spans residues 102-159; the sequence is GIPEAAEEAPATESVAEAEVADVPESELSEAATETAAAELSPPEAEVEKPQVEEAVEA. Acidic residues predominate over residues 120-129; sequence EVADVPESEL. Low complexity predominate over residues 130-145; that stretch reads SEAATETAAAELSPPE.

This sequence belongs to the bacterial ribosomal protein bS16 family.

In Synechococcus sp. (strain JA-2-3B'a(2-13)) (Cyanobacteria bacterium Yellowstone B-Prime), this protein is Small ribosomal subunit protein bS16.